A 146-amino-acid polypeptide reads, in one-letter code: Hemoglobin subunit beta (146 aa).

Valine 1 is modified (N-acetylvaline). In terms of domain architecture, Globin spans 2 to 146 (HLSDGEKNAI…VANALAHKYH (145 aa)). Serine 44 carries the post-translational modification Phosphoserine. Lysine 59 bears the N6-acetyllysine mark. Histidine 63 lines the heme b pocket. Lysine 82 carries the N6-acetyllysine modification. Histidine 92 is a binding site for heme b. Cysteine 93 is modified (S-nitrosocysteine). N6-acetyllysine is present on lysine 144.

The protein belongs to the globin family. In terms of assembly, heterotetramer of two alpha chains and two beta chains. As to expression, red blood cells.

Its function is as follows. Involved in oxygen transport from the lung to the various peripheral tissues. This Spermophilus citellus (European ground squirrel) protein is Hemoglobin subunit beta (HBB).